The chain runs to 257 residues: 3-deoxy-manno-octulosonate cytidylyltransferase (257 aa).

It belongs to the KdsB family.

It is found in the cytoplasm. It catalyses the reaction 3-deoxy-alpha-D-manno-oct-2-ulosonate + CTP = CMP-3-deoxy-beta-D-manno-octulosonate + diphosphate. Its pathway is nucleotide-sugar biosynthesis; CMP-3-deoxy-D-manno-octulosonate biosynthesis; CMP-3-deoxy-D-manno-octulosonate from 3-deoxy-D-manno-octulosonate and CTP: step 1/1. It participates in bacterial outer membrane biogenesis; lipopolysaccharide biosynthesis. Functionally, activates KDO (a required 8-carbon sugar) for incorporation into bacterial lipopolysaccharide in Gram-negative bacteria. This is 3-deoxy-manno-octulosonate cytidylyltransferase from Stenotrophomonas maltophilia (strain K279a).